The chain runs to 153 residues: Large ribosomal subunit protein uL22 (153 aa).

The tract at residues 128-153 is disordered; that stretch reads ADRRARRAAAKPAASASPAANEGVPA. Low complexity predominate over residues 137–147; sequence AKPAASASPAA.

This sequence belongs to the universal ribosomal protein uL22 family. In terms of assembly, part of the 50S ribosomal subunit.

In terms of biological role, this protein binds specifically to 23S rRNA; its binding is stimulated by other ribosomal proteins, e.g. L4, L17, and L20. It is important during the early stages of 50S assembly. It makes multiple contacts with different domains of the 23S rRNA in the assembled 50S subunit and ribosome. The globular domain of the protein is located near the polypeptide exit tunnel on the outside of the subunit, while an extended beta-hairpin is found that lines the wall of the exit tunnel in the center of the 70S ribosome. The polypeptide is Large ribosomal subunit protein uL22 (Acidiphilium cryptum (strain JF-5)).